Consider the following 77-residue polypeptide: Acyl carrier protein (77 aa).

A Carrier domain is found at 1 to 76 (MSLEDDVKAI…DVIKYIQEHQ (76 aa)). At Ser-36 the chain carries O-(pantetheine 4'-phosphoryl)serine.

It belongs to the acyl carrier protein (ACP) family. Post-translationally, 4'-phosphopantetheine is transferred from CoA to a specific serine of apo-ACP by AcpS. This modification is essential for activity because fatty acids are bound in thioester linkage to the sulfhydryl of the prosthetic group.

It localises to the cytoplasm. Its pathway is lipid metabolism; fatty acid biosynthesis. Functionally, carrier of the growing fatty acid chain in fatty acid biosynthesis. This Chlamydia trachomatis serovar L2 (strain ATCC VR-902B / DSM 19102 / 434/Bu) protein is Acyl carrier protein.